A 344-amino-acid chain; its full sequence is Palmitoyltransferase ZDHHC4 (344 aa).

The Lumenal portion of the chain corresponds to 1-2 (MD). Residues 3–23 (FLVLFLFYLASVLMGLVLICV) form a helical membrane-spanning segment. Residues 24–67 (CSKTHSLKGLARGGAQIFSCIIPECLQRAVHGLLHYLFHTRNHT) lie on the Cytoplasmic side of the membrane. A helical membrane pass occupies residues 68 to 88 (FIVLHLVLQGMVYTEYTWEVF). The Lumenal portion of the chain corresponds to 89-99 (GYCQELELSLH). Residues 100 to 120 (YLLLPYLLLGVNLFFFTLTCG) traverse the membrane as a helical segment. Residues 121–192 (TNPGIITKAN…NNCIGAWNIR (72 aa)) lie on the Cytoplasmic side of the membrane. The region spanning 149–199 (VRCSTCDLRKPARSKHCSVCNWCVHRFDHHCVWVNNCIGAWNIRYFLIYVL) is the DHHC domain. Cysteine 179 acts as the S-palmitoyl cysteine intermediate in catalysis. A helical transmembrane segment spans residues 193–213 (YFLIYVLTLTASAATVAIVST). Over 214–255 (TFLVHLVVMSDLYQETYIDDLGHLHVMDTVFLIQYLFLTFPR) the chain is Lumenal. Residues 256–276 (IVFMLGFVVVLSFLLGGYLLF) traverse the membrane as a helical segment. The Cytoplasmic portion of the chain corresponds to 277–344 (VLYLAATNQT…FPCHERKKQE (68 aa)). The short motif at 341–344 (KKQE) is the Di-lysine motif element.

This sequence belongs to the DHHC palmitoyltransferase family. Interacts with CPT1A.

The protein resides in the endoplasmic reticulum membrane. It is found in the golgi apparatus membrane. Its subcellular location is the cell membrane. The catalysed reaction is L-cysteinyl-[protein] + hexadecanoyl-CoA = S-hexadecanoyl-L-cysteinyl-[protein] + CoA. Its function is as follows. Palmitoyltransferase that catalyzes the addition of palmitate onto protein substrates including the D(2) dopamine receptor DRD2, GSK3B or MAVS. Mediates GSK3B palmitoylation to prevent its AKT1-mediated phosphorylation leading to activation of the STAT3 signaling pathway. Also catalyzes MAVS palmitoylation which promotes its stabilization and activation by inhibiting 'Lys-48'- but facilitating 'Lys-63'-linked ubiquitination. This is Palmitoyltransferase ZDHHC4 from Homo sapiens (Human).